Here is a 269-residue protein sequence, read N- to C-terminus: Pyrroline-5-carboxylate reductase (269 aa).

This sequence belongs to the pyrroline-5-carboxylate reductase family.

It is found in the cytoplasm. The catalysed reaction is L-proline + NADP(+) = (S)-1-pyrroline-5-carboxylate + NADPH + 2 H(+). The enzyme catalyses L-proline + NAD(+) = (S)-1-pyrroline-5-carboxylate + NADH + 2 H(+). It functions in the pathway amino-acid biosynthesis; L-proline biosynthesis; L-proline from L-glutamate 5-semialdehyde: step 1/1. Inhibited by p-chloromercuribenzoate. Functionally, catalyzes the reduction of 1-pyrroline-5-carboxylate (PCA) to L-proline. Does not catalyze the reverse reaction. This chain is Pyrroline-5-carboxylate reductase, found in Escherichia coli (strain K12).